The following is a 78-amino-acid chain: Putative defensin-like protein 202 (78 aa).

Positions 1-29 (MAKTQNFVCFTAVLLILILVSTEIPMIEG) are cleaved as a signal peptide. 3 disulfides stabilise this stretch: Cys44-Cys65, Cys49-Cys74, and Cys53-Cys76.

This sequence belongs to the DEFL family.

It is found in the secreted. This chain is Putative defensin-like protein 202, found in Arabidopsis thaliana (Mouse-ear cress).